Consider the following 292-residue polypeptide: 2-dehydro-3-deoxygalactonokinase (292 aa).

It belongs to the DgoK family.

The catalysed reaction is 2-dehydro-3-deoxy-D-galactonate + ATP = 2-dehydro-3-deoxy-6-phospho-D-galactonate + ADP + H(+). It participates in carbohydrate acid metabolism; D-galactonate degradation; D-glyceraldehyde 3-phosphate and pyruvate from D-galactonate: step 2/3. The protein is 2-dehydro-3-deoxygalactonokinase (dgoK) of Escherichia coli (strain K12).